The sequence spans 300 residues: Tyrosine recombinase XerC (300 aa).

The 86-residue stretch at 1–86 folds into the Core-binding (CB) domain; that stretch reads MESVLDAFDQ…AVKTFTAWAV (86 aa). The Tyr recombinase domain occupies 107–294; sequence TLPAVLRQDQ…TVARLRAVHD (188 aa). Residues R151, K175, H246, R249, and H272 contribute to the active site. Y281 (O-(3'-phospho-DNA)-tyrosine intermediate) is an active-site residue.

It belongs to the 'phage' integrase family. XerC subfamily. Forms a cyclic heterotetrameric complex composed of two molecules of XerC and two molecules of XerD.

It localises to the cytoplasm. Its function is as follows. Site-specific tyrosine recombinase, which acts by catalyzing the cutting and rejoining of the recombining DNA molecules. The XerC-XerD complex is essential to convert dimers of the bacterial chromosome into monomers to permit their segregation at cell division. It also contributes to the segregational stability of plasmids. The sequence is that of Tyrosine recombinase XerC from Mycobacterium sp. (strain KMS).